The primary structure comprises 405 residues: Acetate kinase (405 aa).

N7 provides a ligand contact to Mg(2+). ATP is bound at residue K14. A substrate-binding site is contributed by R99. D156 acts as the Proton donor/acceptor in catalysis. 215-219 (HLGNG) is an ATP binding site. Residue E391 coordinates Mg(2+).

This sequence belongs to the acetokinase family. As to quaternary structure, homodimer. The cofactor is Mg(2+). It depends on Mn(2+) as a cofactor.

It is found in the cytoplasm. It catalyses the reaction acetate + ATP = acetyl phosphate + ADP. Its pathway is metabolic intermediate biosynthesis; acetyl-CoA biosynthesis; acetyl-CoA from acetate: step 1/2. Its function is as follows. Catalyzes the formation of acetyl phosphate from acetate and ATP. Can also catalyze the reverse reaction. This is Acetate kinase from Trichormus variabilis (strain ATCC 29413 / PCC 7937) (Anabaena variabilis).